Here is an 858-residue protein sequence, read N- to C-terminus: Toll-like receptor 5 (858 aa).

The signal sequence occupies residues 1-20; the sequence is MGDHLDLLLGVVLMAGPVFG. At 21-639 the chain is on the extracellular side; that stretch reads IPSCSFDGRI…DEEEVLKSLK (619 aa). Residues Asn-37 and Asn-46 are each glycosylated (N-linked (GlcNAc...) asparagine). LRR repeat units follow at residues 45-68, 71-93, 95-117, 120-143, 146-166, 171-192, 197-211, 214-229, and 234-235; these read LNTTERLLLSFNYIRTVTASSFPF, QLQLLELGSQYTPLTIDKEAFRN, PNLRILDLGSSKIYFLHPDAFQG, HLFELRLYFCGLSDAVLKDGYFRN, ALTRLDLSKNQIRSLYLHPSF, SLKSIDFSSNQIFLVCEHELEP, TLSFFSLAANSLYSR, VDWGKCMNPFRNMVLE, and SG. N-linked (GlcNAc...) asparagine glycosylation occurs at Asn-245. LRR repeat units lie at residues 260–284, 289–301, 313–334, 337–355, 385–401, 412–431, 449–470, 474–495, 503–524, 527–546, and 549–567; these read LAHHIMGAGFGFHNIKDPDQNTFAG, SVRHLDLSHGFVF, DLKVLNLAYNKINKIADEAFYG, NLQVLNLSYNLLGELYSSN, KLQTLDLRDNALTTIHF, GNKLVTLPKINLTANLIHLS, HLQILILNQNRFSSCSGDQTPS, SLEQLFLGENMLQLAWETELCW, HLQVLYLNHNYLNSLPPGVFSH, ALRGLSLNSNRLTVLSHNDL, and NLEILDISRNQLLAPNPDV. Asn-342 carries N-linked (GlcNAc...) asparagine glycosylation. Residue Asn-422 is glycosylated (N-linked (GlcNAc...) asparagine). The LRRCT domain occupies 579–631; it reads NKFICECELSTFINWLNHTNVTIAGPPADIYCVYPDSFSGVSLFSLSTEGCDE. 2 cysteine pairs are disulfide-bonded: Cys-583–Cys-610 and Cys-585–Cys-629. Asn-595 and Asn-598 each carry an N-linked (GlcNAc...) asparagine glycan. Residues 640 to 660 form a helical membrane-spanning segment; that stretch reads FSLFIVCTVTLTLFLMTILTV. Topologically, residues 661–858 are cytoplasmic; the sequence is TKFRGFCFIC…IPLQTVATIS (198 aa). Positions 691–836 constitute a TIR domain; it reads YKYDAYLCFS…WFLHKLSQQI (146 aa). A Phosphotyrosine modification is found at Tyr-798. A Phosphoserine; by PKD/PRKD1 modification is found at Ser-805.

Belongs to the Toll-like receptor family. Homodimer. Interacts with MYD88 (via TIR domain). Interacts with TICAM1 (via TIR domain). Interacts with UNC93B1; this interaction is essential for proper TLR5 localization to the plasma membrane. Phosphorylated at Ser-805 by PKD/PRKD1; phosphorylation induces the production of inflammatory cytokines. In terms of processing, phosphorylated at Tyr-798 upon flagellin binding; required for signaling. Highly expressed on the basolateral surface of intestinal epithelia. Expressed also in other cells such as lung epithelial cells.

It localises to the cell membrane. Pattern recognition receptor (PRR) located on the cell surface that participates in the activation of innate immunity and inflammatory response. Recognizes small molecular motifs named pathogen-associated molecular pattern (PAMPs) expressed by pathogens and microbe-associated molecular patterns (MAMPs) usually expressed by resident microbiota. Upon ligand binding such as bacterial flagellins, recruits intracellular adapter proteins MYD88 and TRIF leading to NF-kappa-B activation, cytokine secretion and induction of the inflammatory response. Plays thereby an important role in the relationship between the intestinal epithelium and enteric microbes and contributes to the gut microbiota composition throughout life. The sequence is that of Toll-like receptor 5 (TLR5) from Homo sapiens (Human).